The chain runs to 496 residues: MARKMLKDEEVEVAVTDGGSYDYDLFVIGAGSGGVRGSRTSASFGAKVAICELPFHPISSDWQGGHGGTCVIRGCVPKKILVYGSSFRGEFEDAKNFGWEINGDINFNWKRLLENKTQEIVRLNGVYQRILGNSGVTMIEGAGSLVDAHTVEVTKPDGSKQRYTAKHILIATGSRAQRVNIPGKELAITSDEALSLEELPKRAVILGGGYIAVEFASIWKGMGAHVDLFYRKELPLRGFDDEMRTVVASNLEGRGIRLHPGTNLSELSKTADGIKVVTDKGEEIIADVVLFATGRTPNSQRLNLEAAGVEVDNIGAIKVDDYSRTSVPNIWAVGDVTNRINLTPVALMEATCFSKTVFGGQPTKPDYRDVPCAVFSIPPLSVVGLSEQQALEEAKSDVLVYTSSFNPMKNSISKRQEKTVMKLVVDSETDKVLGASMCGPDAPEIIQGMAVALKCGATKATFDSTVGIHPSAAEEFVTMRTLTRRVSPSSKPKTNL.

Residues Ser32, Gly33, Glu52, Thr69, Cys70, and Lys78 each coordinate FAD. A glutathione-binding site is contributed by Ser32. An intrachain disulfide couples Cys70 to Cys75. Tyr127 lines the glutathione pocket. Residue Gly143 participates in FAD binding. The NADP(+) site is built by Gly208, Ile211, Glu214, Arg231, Arg237, and Gly294. The FAD site is built by Asp335 and Thr343. Ala373 contacts NADP(+). His469 provides a ligand contact to FAD. His469 serves as the catalytic Proton acceptor.

The protein belongs to the class-I pyridine nucleotide-disulfide oxidoreductase family. In terms of assembly, homodimer. Requires FAD as cofactor.

The protein resides in the cytoplasm. The enzyme catalyses 2 glutathione + NADP(+) = glutathione disulfide + NADPH + H(+). Functionally, catalyzes the reduction of glutathione disulfide (GSSG) to reduced glutathione (GSH). Constitutes the major mechanism to maintain a high GSH:GSSG ratio in the cytosol. The polypeptide is Glutathione reductase, cytosolic (GRC2) (Oryza sativa subsp. japonica (Rice)).